A 609-amino-acid polypeptide reads, in one-letter code: Glutamine--fructose-6-phosphate aminotransferase [isomerizing] (609 aa).

Residue cysteine 2 is the Nucleophile; for GATase activity of the active site. The 218-residue stretch at 2–219 (CGIFGYIGAK…SGELAVVGLG (218 aa)) folds into the Glutamine amidotransferase type-2 domain. SIS domains are found at residues 280-426 (ISEK…LKQT) and 458-599 (WAND…IDRP). Residue lysine 604 is the For Fru-6P isomerization activity of the active site.

In terms of assembly, homodimer.

It localises to the cytoplasm. The catalysed reaction is D-fructose 6-phosphate + L-glutamine = D-glucosamine 6-phosphate + L-glutamate. In terms of biological role, catalyzes the first step in hexosamine metabolism, converting fructose-6P into glucosamine-6P using glutamine as a nitrogen source. This chain is Glutamine--fructose-6-phosphate aminotransferase [isomerizing], found in Chlamydia caviae (strain ATCC VR-813 / DSM 19441 / 03DC25 / GPIC) (Chlamydophila caviae).